Consider the following 257-residue polypeptide: MSRFFLRNAFMFVVYAYLYIPIIILVTNSFNKDRYGLSWKGFSWNWYERLFNNDTLIQAAIHSVTIAFFAATLATIVGGLTAIALYRYRFRGKQAVSGMLFIVMMSPDIVMAVSLLALFMVVGISLGFWSLLLAHVTFCLPYVTVTIFSRLNGFDSRMLEAAKDLGASEVTILRKIILPLALPAVVSGWLLSFTISLDDVVVSSFVSGVSYEILPLRIFSLVKTGVTPEVNALATIMIVLSLALVVLSQLITRKNNH.

The Cytoplasmic segment spans residues 1 to 7; it reads MSRFFLR. Residues 8–27 form a helical membrane-spanning segment; the sequence is NAFMFVVYAYLYIPIIILVT. Topologically, residues 28–65 are periplasmic; that stretch reads NSFNKDRYGLSWKGFSWNWYERLFNNDTLIQAAIHSVT. One can recognise an ABC transmembrane type-1 domain in the interval 60–248; that stretch reads AIHSVTIAFF…VLSLALVVLS (189 aa). A helical membrane pass occupies residues 66–85; that stretch reads IAFFAATLATIVGGLTAIAL. At 86–100 the chain is on the cytoplasmic side; sequence YRYRFRGKQAVSGML. A helical membrane pass occupies residues 101 to 120; sequence FIVMMSPDIVMAVSLLALFM. The Periplasmic portion of the chain corresponds to 121 to 128; it reads VVGISLGF. Residues 129 to 148 form a helical membrane-spanning segment; sequence WSLLLAHVTFCLPYVTVTIF. Residues 149–176 lie on the Cytoplasmic side of the membrane; the sequence is SRLNGFDSRMLEAAKDLGASEVTILRKI. A helical transmembrane segment spans residues 177–196; it reads ILPLALPAVVSGWLLSFTIS. The Periplasmic segment spans residues 197–231; that stretch reads LDDVVVSSFVSGVSYEILPLRIFSLVKTGVTPEVN. The chain crosses the membrane as a helical span at residues 232 to 251; it reads ALATIMIVLSLALVVLSQLI. At 252–257 the chain is on the cytoplasmic side; sequence TRKNNH.

It belongs to the binding-protein-dependent transport system permease family. CysTW subfamily.

It is found in the cell inner membrane. Functionally, required for the activity of the bacterial periplasmic transport system of putrescine and spermidine. In Haemophilus influenzae (strain ATCC 51907 / DSM 11121 / KW20 / Rd), this protein is Spermidine/putrescine transport system permease protein PotC (potC).